A 524-amino-acid chain; its full sequence is Alkaline phosphatase, tissue-nonspecific isozyme (524 aa).

The signal sequence occupies residues 1–17; it reads MISPFLVLAIGTCLTNS. D60 serves as a coordination point for Mg(2+). Residues D60 and S110 each coordinate Zn(2+). The active-site Phosphoserine intermediate is the S110. S110 bears the Phosphoserine mark. A disulfide bond links C139 and C201. Residue N140 is glycosylated (N-linked (GlcNAc...) asparagine). T173 serves as a coordination point for Mg(2+). N230 carries N-linked (GlcNAc...) asparagine glycosylation. E235 provides a ligand contact to Ca(2+). N271 is a glycosylation site (N-linked (GlcNAc...) asparagine). F290 and E291 together coordinate Ca(2+). Residue N303 is glycosylated (N-linked (GlcNAc...) asparagine). D306 serves as a coordination point for Ca(2+). E332 contributes to the Mg(2+) binding site. Zn(2+)-binding residues include D337, H341, D378, and H379. N430 carries N-linked (GlcNAc...) asparagine glycosylation. H454 provides a ligand contact to Zn(2+). C489 and C497 form a disulfide bridge. Residue S501 is the site of GPI-anchor amidated serine attachment. The propeptide at 502-524 is removed in mature form; it reads SAGSLAAGPLLLALALYPLSVLF.

Belongs to the alkaline phosphatase family. As to quaternary structure, homodimer. Mg(2+) serves as cofactor. Zn(2+) is required as a cofactor. Requires Ca(2+) as cofactor. In terms of processing, N-glycosylated.

It is found in the cell membrane. Its subcellular location is the extracellular vesicle membrane. The protein localises to the mitochondrion membrane. The protein resides in the mitochondrion intermembrane space. The enzyme catalyses a phosphate monoester + H2O = an alcohol + phosphate. The catalysed reaction is diphosphate + H2O = 2 phosphate + H(+). It carries out the reaction pyridoxal 5'-phosphate + H2O = pyridoxal + phosphate. It catalyses the reaction phosphoethanolamine + H2O = ethanolamine + phosphate. The enzyme catalyses N-phosphocreatine + H2O = creatine + phosphate. The catalysed reaction is ATP + H2O = ADP + phosphate + H(+). It carries out the reaction ADP + H2O = AMP + phosphate + H(+). It catalyses the reaction AMP + H2O = adenosine + phosphate. Its activity is regulated as follows. Phosphatase activity is specifically inhibited by 5-((5-chloro-2-methoxyphenyl)sulfonamido)nicotinamide (SBI-425). Alkaline phosphatase that metabolizes various phosphate compounds and plays a key role in skeletal mineralization and adaptive thermogenesis. Has broad substrate specificity and can hydrolyze a considerable variety of compounds: however, only a few substrates, such as diphosphate (inorganic pyrophosphate; PPi), pyridoxal 5'-phosphate (PLP) and N-phosphocreatine are natural substrates. Plays an essential role in skeletal and dental mineralization via its ability to hydrolyze extracellular diphosphate, a potent mineralization inhibitor, to phosphate: it thereby promotes hydroxyapatite crystal formation and increases inorganic phosphate concentration. Acts in a non-redundant manner with PHOSPHO1 in skeletal mineralization: while PHOSPHO1 mediates the initiation of hydroxyapatite crystallization in the matrix vesicles (MVs), ALPL/TNAP catalyzes the spread of hydroxyapatite crystallization in the extracellular matrix. Also promotes dephosphorylation of osteopontin (SSP1), an inhibitor of hydroxyapatite crystallization in its phosphorylated state; it is however unclear whether ALPL/TNAP mediates SSP1 dephosphorylation via a direct or indirect manner. Catalyzes dephosphorylation of PLP to pyridoxal (PL), the transportable form of vitamin B6, in order to provide a sufficient amount of PLP in the brain, an essential cofactor for enzymes catalyzing the synthesis of diverse neurotransmitters. Additionally, also able to mediate ATP degradation in a stepwise manner to adenosine, thereby regulating the availability of ligands for purinergic receptors. Also capable of dephosphorylating microbial products, such as lipopolysaccharides (LPS) as well as other phosphorylated small-molecules, such as poly-inosine:cytosine (poly I:C). Acts as a key regulator of adaptive thermogenesis as part of the futile creatine cycle: localizes to the mitochondria of thermogenic fat cells and acts by mediating hydrolysis of N-phosphocreatine to initiate a futile cycle of creatine dephosphorylation and phosphorylation. During the futile creatine cycle, creatine and N-phosphocreatine are in a futile cycle, which dissipates the high energy charge of N-phosphocreatine as heat without performing any mechanical or chemical work. The sequence is that of Alkaline phosphatase, tissue-nonspecific isozyme from Homo sapiens (Human).